Consider the following 357-residue polypeptide: Protein RecA (357 aa).

An ATP-binding site is contributed by 71-78 (GPESSGKT).

The protein belongs to the RecA family.

The protein localises to the cytoplasm. Can catalyze the hydrolysis of ATP in the presence of single-stranded DNA, the ATP-dependent uptake of single-stranded DNA by duplex DNA, and the ATP-dependent hybridization of homologous single-stranded DNAs. It interacts with LexA causing its activation and leading to its autocatalytic cleavage. The polypeptide is Protein RecA (Ehrlichia canis (strain Jake)).